A 406-amino-acid polypeptide reads, in one-letter code: MEPKIRRILNKELQRQRDCICLIASENYVSRDILEVTGSILTNKYAEGYPTRRFYEGCEVVDESESLAINTCKELFGAKWANVQPHSGSSANYAVYLALLKPGDAILGLDLNCGGHLTHGNKFNFSGKQYQPYSYTINPETEMLDYDEVLRVAREVKPKLIICGFSNYSRTVDFERFSAIAKEVGAYLLADIAHIAGLVAAGLHPNPLPYTDVVTSTTHKTLRGPRGGLIMSNNEAIIRKLDSGVFPGCQGGPLQHVIAAKYVCFKEALQPKYKQYIQNVKTNAASMASWFKQQGYRVISNGTDTHLFSLDVGKGKDVSQWLQQANIVLNMNTVPFDKNPAINPSGIRIGTPAMTTRGFKEKHFLYVAALIDKIIKSDGNKKVIKEVKKAVLKLLERFPLYKGLEY.

Residues leucine 111 and 115–117 (GHL) each bind (6S)-5,6,7,8-tetrahydrofolate. Lysine 220 bears the N6-(pyridoxal phosphate)lysine mark.

The protein belongs to the SHMT family. As to quaternary structure, homodimer. Pyridoxal 5'-phosphate is required as a cofactor.

The protein resides in the cytoplasm. It carries out the reaction (6R)-5,10-methylene-5,6,7,8-tetrahydrofolate + glycine + H2O = (6S)-5,6,7,8-tetrahydrofolate + L-serine. The protein operates within one-carbon metabolism; tetrahydrofolate interconversion. It functions in the pathway amino-acid biosynthesis; glycine biosynthesis; glycine from L-serine: step 1/1. Its function is as follows. Catalyzes the reversible interconversion of serine and glycine with tetrahydrofolate (THF) serving as the one-carbon carrier. This reaction serves as the major source of one-carbon groups required for the biosynthesis of purines, thymidylate, methionine, and other important biomolecules. Also exhibits THF-independent aldolase activity toward beta-hydroxyamino acids, producing glycine and aldehydes, via a retro-aldol mechanism. The polypeptide is Serine hydroxymethyltransferase (Mycoplasma pneumoniae (strain ATCC 29342 / M129 / Subtype 1) (Mycoplasmoides pneumoniae)).